We begin with the raw amino-acid sequence, 534 residues long: Bifunctional purine biosynthesis protein PurH (534 aa).

The MGS-like domain maps to Thr6 to Val151.

The protein belongs to the PurH family.

The enzyme catalyses (6R)-10-formyltetrahydrofolate + 5-amino-1-(5-phospho-beta-D-ribosyl)imidazole-4-carboxamide = 5-formamido-1-(5-phospho-D-ribosyl)imidazole-4-carboxamide + (6S)-5,6,7,8-tetrahydrofolate. The catalysed reaction is IMP + H2O = 5-formamido-1-(5-phospho-D-ribosyl)imidazole-4-carboxamide. Its pathway is purine metabolism; IMP biosynthesis via de novo pathway; 5-formamido-1-(5-phospho-D-ribosyl)imidazole-4-carboxamide from 5-amino-1-(5-phospho-D-ribosyl)imidazole-4-carboxamide (10-formyl THF route): step 1/1. It functions in the pathway purine metabolism; IMP biosynthesis via de novo pathway; IMP from 5-formamido-1-(5-phospho-D-ribosyl)imidazole-4-carboxamide: step 1/1. The protein is Bifunctional purine biosynthesis protein PurH of Stutzerimonas stutzeri (strain A1501) (Pseudomonas stutzeri).